Reading from the N-terminus, the 1138-residue chain is Myelin regulatory factor (1138 aa).

At 1-768 (MEVVDETEAL…CISQRFLQGT (768 aa)) the chain is on the cytoplasmic side. Disordered stretches follow at residues 56–150 (TASF…YSPQ), 171–200 (VSSR…HYPV), 246–267 (AELP…NTLN), and 279–339 (PGTV…SDSL). The segment covering 67–88 (PGSSGLHHLSPPGSGPSPGRHG) has biased composition (low complexity). Lysine 123 carries the post-translational modification N6-acetyllysine. Residues 178–198 (PPPPPAHLPGPPPPPPPPPHY) are compositionally biased toward pro residues. The segment at residues 250–541 (PHPSKKRKHS…SNPGQFESDS (292 aa)) is a DNA-binding region (NDT80). Residues 254-257 (KKRK) carry the Nuclear localization signal motif. Residues 286 to 302 (PPHPARAPSPPWPPQGP) are compositionally biased toward pro residues. Low complexity predominate over residues 329-339 (SPGLLQDSDSL). The short motif at 491-494 (KKGK) is the Nuclear localization signal element. The Peptidase S74 domain occupies 587 to 696 (SDLRAKEHVQ…KLTDNLETRI (110 aa)). The stretch at 680-711 (GAVKELCKLTDNLETRIDELERWSHKLAKLRR) forms a coiled coil. Over residues 721 to 733 (SGAFSHAGSQFSR) the composition is skewed to polar residues. Residues 721–753 (SGAFSHAGSQFSRAGSVPHKKRPPKLANKSSPA) form a disordered region. Residues 765–1003 (LQGTIIALVV…QGQLDPAPSL (239 aa)) form a required for interaction with TMEM98 region. A helical transmembrane segment spans residues 769-789 (IIALVVVMAFSVVSMSTLYVL). The Lumenal portion of the chain corresponds to 790–1138 (SLRSEEDLVD…YYFHFYRLCD (349 aa)). Over residues 891 to 900 (ATDPALGPTL) the composition is skewed to low complexity. Disordered regions lie at residues 891–922 (ATDP…APLP) and 951–999 (ASPV…QLDP). Composition is skewed to polar residues over residues 961 to 974 (QSKT…NLQS) and 987 to 999 (PAQF…QLDP). N-linked (GlcNAc...) asparagine glycosylation is found at asparagine 1030, asparagine 1052, and asparagine 1116.

This sequence belongs to the MRF family. As to quaternary structure, homotrimer. Interacts (via C-terminal region) with TMEM98; the interaction inhibits MYRF self-cleavage. In terms of processing, glycosylated. Post-translationally, follows autocatalytic cleavage via the peptidase S74 domain. Autoprocessing is apparently constitutive and is essential for transcriptional activity. Autocatalytic cleavage is inhibited by interaction with TMEM98. As to expression, specifically expressed by postmitotic oligodendrocytes in the CNS. Not detected in the peripheral nervous system (PNS).

Its subcellular location is the endoplasmic reticulum membrane. It localises to the nucleus. It is found in the cytoplasm. In terms of biological role, constitutes a precursor of the transcription factor. Mediates the autocatalytic cleavage that releases the Myelin regulatory factor, N-terminal component that specifically activates transcription of central nervous system (CNS) myelin genes. Functionally, membrane-bound part that has no transcription factor activity and remains attached to the endoplasmic reticulum membrane following cleavage. Its function is as follows. Transcription factor that specifically activates expression of myelin genes such as MBP, MOG, MAG, DUSP15 and PLP1 during oligodendrocyte (OL) maturation, thereby playing a central role in oligodendrocyte maturation and CNS myelination. Specifically recognizes and binds DNA sequence 5'-CTGGYAC-3' in the regulatory regions of myelin-specific genes and directly activates their expression. Not only required during oligodendrocyte differentiation but is also required on an ongoing basis for the maintenance of expression of myelin genes and for the maintenance of a mature, viable oligodendrocyte phenotype. The chain is Myelin regulatory factor (Myrf) from Mus musculus (Mouse).